A 510-amino-acid polypeptide reads, in one-letter code: Ankyrin repeat domain-containing protein 13C-A (510 aa).

The span at 1-19 (MTGEKIRSLHKDQKPSKDE) shows a compositional bias: basic and acidic residues. The segment at 1–35 (MTGEKIRSLHKDQKPSKDEDLLEPDEEATAGGTFT) is disordered. ANK repeat units lie at residues 80 to 111 (DVYF…QKDS), 112 to 141 (HGNT…PVKV), and 145 to 174 (QGWS…QQSR).

It is found in the endoplasmic reticulum membrane. Functionally, acts as a molecular chaperone for G protein-coupled receptors, regulating their biogenesis and exit from the ER. The polypeptide is Ankyrin repeat domain-containing protein 13C-A (ankrd13c-a) (Xenopus laevis (African clawed frog)).